The chain runs to 393 residues: MAFIRVTDLDLAGKRVFIRADMNVPVKDGKVTSDARITASMRTIEHCMRAGAKVMVTSHLGRPTEGEFKEEDSLKPVVDVIAQKLGKNVRLIREWTEGGFDVANGELVVLENCRVNKGEKKNVDETAKKYAALCDVFVMDAFGTAHRAEASTHGIAKFAPTAAAGILLTEELDALAKALANPARPMVAIVGGSKVSTKLTVLEALSEKVDQLVVGGGIANTFLAAMGKNVGKSLCEHDLIPTAKTLIEKMAARGASIPIAVDVVCGKKFDANEPAVLKSADEVADDDMIFDIGPKSAQELADIIAKAGTIVWNGPVGVFEFDQFGEGTKTVSMAIANAPGFSLAGGGDTIAAIQKYDIYDKVSYISTAGGAFLEYLEGKVLPAVAILEERAQG.

Residues 21 to 23, Arg-36, 59 to 62, Arg-114, and Arg-147 contribute to the substrate site; these read DMN and HLGR. Residues Lys-198, Glu-320, and 346–349 each bind ATP; that span reads GGDT.

This sequence belongs to the phosphoglycerate kinase family. Monomer.

Its subcellular location is the cytoplasm. The catalysed reaction is (2R)-3-phosphoglycerate + ATP = (2R)-3-phospho-glyceroyl phosphate + ADP. It participates in carbohydrate degradation; glycolysis; pyruvate from D-glyceraldehyde 3-phosphate: step 2/5. This Thiobacillus denitrificans (strain ATCC 25259 / T1) protein is Phosphoglycerate kinase.